The primary structure comprises 133 residues: Small heat shock protein ibp (133 aa).

The region spanning 11 to 126 (EQPLSENPNY…KPKKISINEE (116 aa)) is the sHSP domain.

It belongs to the small heat shock protein (HSP20) family.

This is Small heat shock protein ibp (ibp) from Wigglesworthia glossinidia brevipalpis.